The following is a 295-amino-acid chain: MSKIPSVNIKELLDAGVHFGHKTSRWNPKMASYIYGERDDVHIIDLRQSVALMSVALNAIYETVKKDGKILFVSTKIQASDIIAEYAEKCGQYYVNHRWLGGMLTNWKTIAGSIEKLNKLDKTLENEEALMGYTKKEILDMSRKKDKLLLSLAGIRNLNSKPDLLVVIDTNKEHIAINEAVKLNVPIVAVVDTNSNPDNVDYPIPGNDDSIRSIRLYCSLFADAALQGLEESMKASGVDMGAMQEHTDKALTSKNVSKLKQAKKFSKTKNIDEETNTEFEQALNDADENKNSDNA.

Residues 263 to 295 are disordered; sequence KKFSKTKNIDEETNTEFEQALNDADENKNSDNA.

This sequence belongs to the universal ribosomal protein uS2 family.

This is Small ribosomal subunit protein uS2 from Rickettsia massiliae (strain Mtu5).